A 500-amino-acid polypeptide reads, in one-letter code: Beta-glucosidase 2 (500 aa).

The first 24 residues, 1–24, serve as a signal peptide directing secretion; sequence MGAAAAAGFFFVLLFLSVQGGAVG. A beta-D-glucoside-binding residues include Gln44 and His144. Glu190 (proton donor) is an active-site residue. Cys209 and Cys218 are oxidised to a cystine. Asn222 is a glycosylation site (N-linked (GlcNAc...) asparagine). A beta-D-glucoside is bound by residues Tyr334 and Glu403. Glu403 acts as the Nucleophile in catalysis. Asn410 carries an N-linked (GlcNAc...) asparagine glycan. An a beta-D-glucoside-binding site is contributed by Trp445.

The protein belongs to the glycosyl hydrolase 1 family.

It catalyses the reaction Hydrolysis of terminal, non-reducing beta-D-glucosyl residues with release of beta-D-glucose.. This chain is Beta-glucosidase 2 (BGLU2), found in Oryza sativa subsp. japonica (Rice).